A 247-amino-acid polypeptide reads, in one-letter code: Carboxy-S-adenosyl-L-methionine synthase (247 aa).

Residues Tyr39, 64–66 (GCS), 89–90 (DN), 117–118 (DI), Asn132, and Arg199 each bind S-adenosyl-L-methionine.

This sequence belongs to the class I-like SAM-binding methyltransferase superfamily. Cx-SAM synthase family. Homodimer.

The catalysed reaction is prephenate + S-adenosyl-L-methionine = carboxy-S-adenosyl-L-methionine + 3-phenylpyruvate + H2O. Catalyzes the conversion of S-adenosyl-L-methionine (SAM) to carboxy-S-adenosyl-L-methionine (Cx-SAM). The protein is Carboxy-S-adenosyl-L-methionine synthase of Escherichia coli O7:K1 (strain IAI39 / ExPEC).